Reading from the N-terminus, the 238-residue chain is Fibroblast growth factor-binding protein 1 (238 aa).

Positions 1 to 20 (MRIHGLILLSFLLLAAQVLS) are cleaved as a signal peptide. A disordered region spans residues 25–61 (KTAKNVPDSTTEEDMSPSLGKARNKQRSRTSKSMTHG). Disulfide bonds link cysteine 71–cysteine 88, cysteine 97–cysteine 130, and cysteine 106–cysteine 142. An O-linked (GalNAc...) serine glycan is attached at serine 164. The sufficient for interaction with FGF2 and FGF2-induced effects stretch occupies residues 197 to 238 (KDSECLEDPDVLTQRKTALEFCGESWSSFCTFFLNMLQATSC). 2 disulfide bridges follow: cysteine 201–cysteine 238 and cysteine 218–cysteine 226.

The protein belongs to the fibroblast growth factor-binding protein family. As to quaternary structure, found in a complex with FGFBP1, FGF1 and FGF2. Interacts with FGF1, FGF2, FGF7, FGF10, FGF22 and HSPG2. In terms of tissue distribution, expressed in gut, eye, thymus, skin, lung, tongue, Purkinje cells and cerebral chorioid plexus (at protein level).

The protein localises to the secreted. It is found in the extracellular space. The protein resides in the cell membrane. Acts as a carrier protein that release fibroblast-binding factors (FGFs) from the extracellular matrix (EM) storage and thus enhance the mitogenic activity of FGFs. Enhances FGF2 signaling during tissue repair, angiogenesis and in tumor growth. The chain is Fibroblast growth factor-binding protein 1 (Fgfbp1) from Rattus norvegicus (Rat).